We begin with the raw amino-acid sequence, 529 residues long: Bifunctional purine biosynthesis protein PurH (529 aa).

An MGS-like domain is found at 1 to 148 (MQQRRPVRRA…KNHKDVAIVV (148 aa)).

Belongs to the PurH family.

It catalyses the reaction (6R)-10-formyltetrahydrofolate + 5-amino-1-(5-phospho-beta-D-ribosyl)imidazole-4-carboxamide = 5-formamido-1-(5-phospho-D-ribosyl)imidazole-4-carboxamide + (6S)-5,6,7,8-tetrahydrofolate. It carries out the reaction IMP + H2O = 5-formamido-1-(5-phospho-D-ribosyl)imidazole-4-carboxamide. It participates in purine metabolism; IMP biosynthesis via de novo pathway; 5-formamido-1-(5-phospho-D-ribosyl)imidazole-4-carboxamide from 5-amino-1-(5-phospho-D-ribosyl)imidazole-4-carboxamide (10-formyl THF route): step 1/1. The protein operates within purine metabolism; IMP biosynthesis via de novo pathway; IMP from 5-formamido-1-(5-phospho-D-ribosyl)imidazole-4-carboxamide: step 1/1. The polypeptide is Bifunctional purine biosynthesis protein PurH (Salmonella paratyphi A (strain ATCC 9150 / SARB42)).